We begin with the raw amino-acid sequence, 479 residues long: Nucleoside-diphosphatase uda-1 (479 aa).

Topologically, residues Met-1–Ser-7 are cytoplasmic. The chain crosses the membrane as a helical; Signal-anchor for type II membrane protein span at residues Ile-8–Thr-24. Residues Gln-25 to Val-479 are Lumenal-facing. Glu-171 serves as the catalytic Proton acceptor. N-linked (GlcNAc...) asparagine glycosylation is found at Asn-300 and Asn-452.

Belongs to the GDA1/CD39 NTPase family. Ca(2+) serves as cofactor. Mg(2+) is required as a cofactor. The cofactor is Mn(2+).

Its subcellular location is the endomembrane system. The catalysed reaction is a ribonucleoside 5'-diphosphate + H2O = a ribonucleoside 5'-phosphate + phosphate + H(+). Functionally, hydrolyzes UDP and GDP but not any other nucleoside di-, mono- or triphosphates. May promote reglycosylation reactions involved in glycoproteins folding and quality control in the endoplasmic reticulum. The sequence is that of Nucleoside-diphosphatase uda-1 (uda-1) from Caenorhabditis elegans.